The sequence spans 1163 residues: DNA-directed RNA polymerase subunit beta'' (1163 aa).

The Zn(2+) site is built by Cys-16, Cys-87, Cys-94, and Cys-97.

The protein belongs to the RNA polymerase beta' chain family. RpoC2 subfamily. In plastids the minimal PEP RNA polymerase catalytic core is composed of four subunits: alpha, beta, beta', and beta''. When a (nuclear-encoded) sigma factor is associated with the core the holoenzyme is formed, which can initiate transcription. Zn(2+) is required as a cofactor.

The protein resides in the plastid. It localises to the chloroplast. It carries out the reaction RNA(n) + a ribonucleoside 5'-triphosphate = RNA(n+1) + diphosphate. In terms of biological role, DNA-dependent RNA polymerase catalyzes the transcription of DNA into RNA using the four ribonucleoside triphosphates as substrates. The sequence is that of DNA-directed RNA polymerase subunit beta'' (rpoC2) from Pisum sativum (Garden pea).